Here is a 151-residue protein sequence, read N- to C-terminus: Small ribosomal subunit protein uS15 (151 aa).

Belongs to the universal ribosomal protein uS15 family.

This is Small ribosomal subunit protein uS15 (RpS13) from Anopheles gambiae (African malaria mosquito).